Here is a 643-residue protein sequence, read N- to C-terminus: Threonine--tRNA ligase (643 aa).

Residues 1-61 enclose the TGS domain; the sequence is MPIITLPDGS…SEDSSLEIIT (61 aa). Residues 243 to 534 are catalytic; it reads DHRRIGKALD…ITEEYAGFFP (292 aa). The Zn(2+) site is built by cysteine 334, histidine 385, and histidine 511.

The protein belongs to the class-II aminoacyl-tRNA synthetase family. In terms of assembly, homodimer. Requires Zn(2+) as cofactor.

The protein localises to the cytoplasm. The enzyme catalyses tRNA(Thr) + L-threonine + ATP = L-threonyl-tRNA(Thr) + AMP + diphosphate + H(+). Its function is as follows. Catalyzes the attachment of threonine to tRNA(Thr) in a two-step reaction: L-threonine is first activated by ATP to form Thr-AMP and then transferred to the acceptor end of tRNA(Thr). Also edits incorrectly charged L-seryl-tRNA(Thr). This Actinobacillus pleuropneumoniae serotype 5b (strain L20) protein is Threonine--tRNA ligase.